The following is a 343-amino-acid chain: MTKTMLRALKGETLPTPPIWLMRQAGRYLPEYRATRAQAGDFLSLCYTPDLAAEVTLQPIRRYGFDAAILFADILLLPQALGADLWFETGEGPRMSTITDMAGVTALKGRDDIHETLAPVYETCRILARELPKETTFIGFAGMPWTVATYMIAGRGSKDQAAAHKLKDTDRPAFEALMDRVTEATIEYLAKQVEAGCEVVKLFDSWAGSLKGQDFEDFAVAPAKRIVSELKARFQGLPVIAFPREAGEGYIGFAEKTGADCVAIDNSVSPEWAAEKVQAGRTCVQGNLDPKYMVTGGEELVQATKRVVEAFRNGPHIFNLGHGITPEADPENVTLLVETIRGK.

Substrate contacts are provided by residues 23 to 27 (RQAGR), phenylalanine 42, aspartate 73, tyrosine 150, serine 205, and histidine 322.

The protein belongs to the uroporphyrinogen decarboxylase family. Homodimer.

Its subcellular location is the cytoplasm. The catalysed reaction is uroporphyrinogen III + 4 H(+) = coproporphyrinogen III + 4 CO2. It participates in porphyrin-containing compound metabolism; protoporphyrin-IX biosynthesis; coproporphyrinogen-III from 5-aminolevulinate: step 4/4. Inhibited by N-ethyl-maleimide and phenylglyoxal. Functionally, catalyzes the decarboxylation of four acetate groups of uroporphyrinogen-III to yield coproporphyrinogen-III. In Cereibacter sphaeroides (strain ATCC 17023 / DSM 158 / JCM 6121 / CCUG 31486 / LMG 2827 / NBRC 12203 / NCIMB 8253 / ATH 2.4.1.) (Rhodobacter sphaeroides), this protein is Uroporphyrinogen decarboxylase (hemE).